The sequence spans 957 residues: Glycine dehydrogenase (decarboxylating) (957 aa).

Lys-708 carries the N6-(pyridoxal phosphate)lysine modification.

It belongs to the GcvP family. In terms of assembly, the glycine cleavage system is composed of four proteins: P, T, L and H. Requires pyridoxal 5'-phosphate as cofactor.

The enzyme catalyses N(6)-[(R)-lipoyl]-L-lysyl-[glycine-cleavage complex H protein] + glycine + H(+) = N(6)-[(R)-S(8)-aminomethyldihydrolipoyl]-L-lysyl-[glycine-cleavage complex H protein] + CO2. Functionally, the glycine cleavage system catalyzes the degradation of glycine. The P protein binds the alpha-amino group of glycine through its pyridoxal phosphate cofactor; CO(2) is released and the remaining methylamine moiety is then transferred to the lipoamide cofactor of the H protein. The protein is Glycine dehydrogenase (decarboxylating) of Salmonella newport (strain SL254).